The sequence spans 124 residues: Fluoride-specific ion channel FluC (124 aa).

4 helical membrane passes run 5–25 (ILAV…AGTW), 37–57 (ATLA…GLFL), 69–89 (GLIV…LDTL), and 99–119 (LALG…WAGL). Gly-76 and Thr-79 together coordinate Na(+).

Belongs to the fluoride channel Fluc/FEX (TC 1.A.43) family.

It is found in the cell inner membrane. It carries out the reaction fluoride(in) = fluoride(out). Its activity is regulated as follows. Na(+) is not transported, but it plays an essential structural role and its presence is essential for fluoride channel function. Functionally, fluoride-specific ion channel. Important for reducing fluoride concentration in the cell, thus reducing its toxicity. The protein is Fluoride-specific ion channel FluC of Pseudomonas syringae pv. tomato (strain ATCC BAA-871 / DC3000).